A 467-amino-acid polypeptide reads, in one-letter code: Thiohydroximate-O-sulfate sulfur/sulfate-lyase (nitrile-forming) NSP3 (467 aa).

The 142-residue stretch at 2-143 folds into the Jacalin-type lectin domain; sequence AQKLVAQGGE…LHSLGAYVSL (142 aa). 5 Kelch repeats span residues 177-225, 230-276, 280-329, 331-375, and 379-434; these read KIYS…VRMV, TLYT…SMAA, NVYV…VVQG, VWIV…ASAA, and HIVI…ASTT. Arginine 237 functions as the Proton donor in the catalytic mechanism. Residues arginine 237, serine 270, arginine 292, glycine 321, and valine 370 each contribute to the a (Z)-N-(sulfonatooxy)alkanimidothioate site. Arginine 292 functions as the Proton donor in the catalytic mechanism. Positions 386, 390, and 394 each coordinate Fe(2+). An a (Z)-N-(sulfonatooxy)alkanimidothioate-binding site is contributed by tryptophan 429.

This sequence belongs to the jacalin lectin family. Requires Fe(2+) as cofactor. In terms of tissue distribution, mainly expressed in roots, and, at low levels, in seedlings and leaves. Observed in seeds.

It catalyses the reaction a (Z)-N-(sulfonatooxy)alkanimidothioate = a nitrile + sulfur + sulfate. The enzyme catalyses (Z)-phenyl-N-(sulfonatooxy)methanimidothioate = phenylacetonitrile + sulfur + sulfate. It carries out the reaction (Z)-N-(sulfonatooxy)prop-2-enimidothioate = but-3-enenitrile + sulfur + sulfate. Functionally, specifier protein responsible for constitutive and herbivore-induced simple nitrile formation, especially in roots. Promotes simple nitriles, but not epithionitrile or thiocyanate formation. Converts allylglucosinolate and benzylglucosinolate (glucotropaeolin) to their corresponding simple nitriles in the presence of myrosinase. The sequence is that of Thiohydroximate-O-sulfate sulfur/sulfate-lyase (nitrile-forming) NSP3 from Arabidopsis thaliana (Mouse-ear cress).